Reading from the N-terminus, the 355-residue chain is MKIAVLPGDGIGPEIVAEAVKVLNALDEKFEMETAPVGGAGYEAEGHPLPDNTLKLAKEADAILFGAVGDWKYDSLDRPLRPEQAILGLRKHLQLFANFRPAICYPELTGASSLKPELVAGLDILIVRELNGDIYFGQPRGVREAPDGLFKGAREGFDTMRYSEPEVRRIAHVAFQAAAKRGKKLCSVDKANVLETFQFWKDIVIDVSKEYPDVELSHMYVDNAAMQLVKAPKSFDVIVTGNMFGDILSDEAAMLTGSIGMLPSASLDANNKGLYEPSHGSAPDIAGKGVANPLATILSAAMMLRYSLNRAEQADRIENAVKKVLAQGYRTADIVTPGCKQVGTREMGEAVLAAL.

Arg90, Arg100, Arg128, and Asp222 together coordinate substrate. 3 residues coordinate Mg(2+): Asp222, Asp246, and Asp250. NAD(+) is bound at residue 280–292 (GSAPDIAGKGVAN).

The protein belongs to the isocitrate and isopropylmalate dehydrogenases family. LeuB type 1 subfamily. Homodimer. It depends on Mg(2+) as a cofactor. Requires Mn(2+) as cofactor.

Its subcellular location is the cytoplasm. It catalyses the reaction (2R,3S)-3-isopropylmalate + NAD(+) = 4-methyl-2-oxopentanoate + CO2 + NADH. Its pathway is amino-acid biosynthesis; L-leucine biosynthesis; L-leucine from 3-methyl-2-oxobutanoate: step 3/4. Its function is as follows. Catalyzes the oxidation of 3-carboxy-2-hydroxy-4-methylpentanoate (3-isopropylmalate) to 3-carboxy-4-methyl-2-oxopentanoate. The product decarboxylates to 4-methyl-2 oxopentanoate. The sequence is that of 3-isopropylmalate dehydrogenase from Cupriavidus metallidurans (strain ATCC 43123 / DSM 2839 / NBRC 102507 / CH34) (Ralstonia metallidurans).